A 154-amino-acid chain; its full sequence is UPF0547 protein C16orf87 homolog (154 aa).

A disordered region spans residues N43–E119. Basic and acidic residues predominate over residues V68 to R84. S91 is subject to Phosphoserine. Positions K104 to K132 form a coiled coil. Basic and acidic residues predominate over residues K109–E119.

Belongs to the UPF0547 family.

In Mus musculus (Mouse), this protein is UPF0547 protein C16orf87 homolog.